The primary structure comprises 274 residues: Ciliary microtubule inner protein 2B (274 aa).

2 disordered regions span residues 46–89 and 119–171; these read SPGL…SSMV and TQRN…MDDR. Residues 130–155 are compositionally biased toward basic and acidic residues; that stretch reads LPKEAKGEKDVEKDQEPKPEVEKEPE.

It belongs to the CIMIP2 family. Microtubule inner protein component of sperm flagellar doublet microtubules. Expressed in trachea multiciliated cells.

Its subcellular location is the cytoplasm. It localises to the cytoskeleton. The protein resides in the cilium axoneme. The protein localises to the flagellum axoneme. Functionally, microtubule inner protein (MIP) part of the dynein-decorated doublet microtubules (DMTs) in cilia axoneme, which is required for motile cilia beating. This is Ciliary microtubule inner protein 2B (CIMIP2B) from Bos taurus (Bovine).